The sequence spans 242 residues: Tyrosine recombinase XerD-like (242 aa).

Residues 1–71 (MKEAIDQFIQ…AVNQFLYFLY (71 aa)) enclose the Core-binding (CB) domain. One can recognise a Tyr recombinase domain in the interval 90–242 (ENSSQGSLLD…KSITTLEKYR (153 aa)). Residues lysine 148 and arginine 209 contribute to the active site. Tyrosine 241 serves as the catalytic O-(3'-phospho-DNA)-tyrosine intermediate.

Belongs to the 'phage' integrase family. XerD-like subfamily.

It is found in the cytoplasm. Functionally, putative tyrosine recombinase. Not involved in the cutting and rejoining of the recombining DNA molecules on dif(SL) site. The polypeptide is Tyrosine recombinase XerD-like (Streptococcus gordonii (strain Challis / ATCC 35105 / BCRC 15272 / CH1 / DL1 / V288)).